Here is a 481-residue protein sequence, read N- to C-terminus: Small ribosomal subunit protein bS1 (481 aa).

S1 motif domains follow at residues 36–105, 123–188, 209–277, and 294–363; these read GDIV…LSKK, DEAV…LSRR, GTIR…LSLK, and GQIV…LSLK. Residues 429-467 are disordered; the sequence is TAQMEKFAAAEAAGRGADDQSSASSAPSEKTAGGSLASD. Residues 437–456 show a composition bias toward low complexity; sequence AAEAAGRGADDQSSASSAPS.

Belongs to the bacterial ribosomal protein bS1 family.

Binds mRNA; thus facilitating recognition of the initiation point. It is needed to translate mRNA with a short Shine-Dalgarno (SD) purine-rich sequence. The protein is Small ribosomal subunit protein bS1 (rpsA) of Mycobacterium tuberculosis (strain CDC 1551 / Oshkosh).